A 514-amino-acid chain; its full sequence is 2,3-bisphosphoglycerate-independent phosphoglycerate mutase (514 aa).

D14 and S64 together coordinate Mn(2+). S64 (phosphoserine intermediate) is an active-site residue. Substrate is bound by residues H125, 155 to 156 (RD), R187, R193, 263 to 266 (RADR), and K336. Positions 403, 407, 444, 445, and 463 each coordinate Mn(2+).

This sequence belongs to the BPG-independent phosphoglycerate mutase family. As to quaternary structure, monomer. Mn(2+) is required as a cofactor.

The enzyme catalyses (2R)-2-phosphoglycerate = (2R)-3-phosphoglycerate. The protein operates within carbohydrate degradation; glycolysis; pyruvate from D-glyceraldehyde 3-phosphate: step 3/5. Its function is as follows. Catalyzes the interconversion of 2-phosphoglycerate and 3-phosphoglycerate. The chain is 2,3-bisphosphoglycerate-independent phosphoglycerate mutase from Shigella flexneri.